A 607-amino-acid polypeptide reads, in one-letter code: TOM1-like protein 8 (607 aa).

A VHS domain is found at 9–138; sequence ATSDMLIGPD…ELLRAGIVFP (130 aa). A disordered region spans residues 141–175; the sequence is PQITPSSGQNGPSTRYPQNSRNARQEAIDTSTESE. The GAT domain maps to 175 to 263; it reads EFPTLSLTEI…LLAKHEAIAS (89 aa). S297 carries the phosphoserine modification. The span at 355-379 shows a compositional bias: polar residues; sequence NNCESSTPTSNPHANHQKVQQNYSN. 3 disordered regions span residues 355 to 393, 407 to 460, and 555 to 582; these read NNCE…YYGQ, QPSS…SPTH, and DNGN…NKKP. Phosphoserine is present on S410. Residues 448–460 show a composition bias toward low complexity; the sequence is QSPSSSPQYSPTH. A compositionally biased stretch (polar residues) spans 555-569; it reads DNGNNNTNPYQVSSH.

This sequence belongs to the TOM1 family. In terms of tissue distribution, specifically expressed in siliques and flowers.

It is found in the membrane. Its function is as follows. Might contribute to the loading of the ESCRT machinery. The protein is TOM1-like protein 8 of Arabidopsis thaliana (Mouse-ear cress).